We begin with the raw amino-acid sequence, 308 residues long: MSEEKNYELWLDNYFFKPNFWQKCLAFILLPLSVFYAFFAILNTFFRKKIVFKKPVISVGNLSFGGNGKTPLCKAIAREFDGVFIVLRGYKRKSKGLFVVKNQNEILCTLTQSGDEAMEYAFEENIKGVIVSEDRVKGIEKAFELGAKIVVLDDAFSKFHIKKFDILLESKIKPYFNFTLPSGAYRLPKFYEKRADFIALEGRDFVRYSFVKENPKAVLVTAIAKPFRLYEHFIKARACYFFKDHYEFKKEELENLLKKHNCDTLMLTFKDFVKVKDFGFKCQIIELNIELKDSLREKIKTYIKEFEQ.

63–70 lines the ATP pocket; the sequence is SFGGNGKT.

It belongs to the LpxK family.

It catalyses the reaction a lipid A disaccharide + ATP = a lipid IVA + ADP + H(+). It participates in glycolipid biosynthesis; lipid IV(A) biosynthesis; lipid IV(A) from (3R)-3-hydroxytetradecanoyl-[acyl-carrier-protein] and UDP-N-acetyl-alpha-D-glucosamine: step 6/6. In terms of biological role, transfers the gamma-phosphate of ATP to the 4'-position of a tetraacyldisaccharide 1-phosphate intermediate (termed DS-1-P) to form tetraacyldisaccharide 1,4'-bis-phosphate (lipid IVA). The polypeptide is Tetraacyldisaccharide 4'-kinase (Campylobacter jejuni subsp. jejuni serotype O:6 (strain 81116 / NCTC 11828)).